The primary structure comprises 191 residues: MVKKLVMAQKRGETRALCLGVTMVVCAVITYYILVTTVLPLYQKSVWTQESKCHLIETNIRDQEELKGKKVPQYPCLWVNVSAAGRWAVLYHTEDTRDQNQQCSYIPGSVDNYQTARADVEKVRAKFQEQQVFYCFSAPRGNETSVLFQRLYGPQALLFSLFWPTFLLTGGLLIIAMVKSNQYLSILAAQK.

Residues 1-18 (MVKKLVMAQKRGETRALC) lie on the Cytoplasmic side of the membrane. The helical transmembrane segment at 19-39 (LGVTMVVCAVITYYILVTTVL) threads the bilayer. Residues 40–157 (PLYQKSVWTQ…FQRLYGPQAL (118 aa)) are Extracellular-facing. N-linked (GlcNAc...) asparagine glycosylation is found at asparagine 80 and asparagine 142. A helical transmembrane segment spans residues 158–178 (LFSLFWPTFLLTGGLLIIAMV). Topologically, residues 179–191 (KSNQYLSILAAQK) are cytoplasmic.

It belongs to the KCNMB (TC 8.A.14.1) family. KCNMB1 subfamily. Interacts with KCNMA1 tetramer. There are probably 4 molecules of KCMNB1 per KCNMA1 tetramer. N-glycosylated. In terms of tissue distribution, abundantly expressed in smooth muscle. Low levels of expression in most other tissues. Within the brain, relatively high levels found in hippocampus and corpus callosum.

Its subcellular location is the membrane. Its function is as follows. Regulatory subunit of the calcium activated potassium KCNMA1 (maxiK) channel. Modulates the calcium sensitivity and gating kinetics of KCNMA1, thereby contributing to KCNMA1 channel diversity. Increases the apparent Ca(2+)/voltage sensitivity of the KCNMA1 channel. It also modifies KCNMA1 channel kinetics and alters its pharmacological properties. It slows down the activation and the deactivation kinetics of the channel. Acts as a negative regulator of smooth muscle contraction by enhancing the calcium sensitivity to KCNMA1. Its presence is also a requirement for internal binding of the KCNMA1 channel opener dehydrosoyasaponin I (DHS-1) triterpene glycoside and for external binding of the agonist hormone 17-beta-estradiol (E2). Increases the binding activity of charybdotoxin (CTX) toxin to KCNMA1 peptide blocker by increasing the CTX association rate and decreasing the dissociation rate. This Homo sapiens (Human) protein is Calcium-activated potassium channel subunit beta-1 (KCNMB1).